A 65-amino-acid polypeptide reads, in one-letter code: KKEGYLVGNDGCKYGCFTRPAQYCESECSLRKGTGGYCYAWLACYCYNMPDWVPTWNSAKNRCGK.

Residues 2–64 (KEGYLVGNDG…TWNSAKNRCG (63 aa)) form the LCN-type CS-alpha/beta domain. Intrachain disulfides connect cysteine 12-cysteine 63, cysteine 16-cysteine 38, cysteine 24-cysteine 44, and cysteine 28-cysteine 46.

The protein belongs to the long (4 C-C) scorpion toxin superfamily. Sodium channel inhibitor family. As to expression, expressed by the venom gland.

Its subcellular location is the secreted. Beta toxins bind voltage-independently at site-4 of sodium channels (Nav) and shift the voltage of activation toward more negative potentials thereby affecting sodium channel activation and promoting spontaneous and repetitive firing. This toxin acts on human Nav1.4/SCN4A and Nav1.6/SCN8A voltage-gated sodium channels. The polypeptide is Beta-mammal toxin Tma1 (Tityus macrochirus (Scorpion)).